The primary structure comprises 463 residues: Female germline-specific tumor suppressor gld-1 (463 aa).

Residues 1–10 (MPSCTTPTYG) show a composition bias toward polar residues. The tract at residues 1–76 (MPSCTTPTYG…RAPPPARLTL (76 aa)) is disordered. Over residues 11 to 31 (VSTQLESQSSESPSRSSVMTP) the composition is skewed to low complexity. The segment at 135 to 205 (PTATEPIEVE…PEPAGDMISI (71 aa)) is qua1 domain; involved in homodimerization. A KH domain is found at 208–260 (KIYVPKNEYPDYNFVGRILGPRGMTAKQLEQDTGCKIMVRGKGSMRDKSKESA). Residues 305-336 (APEGTDELKRKQLMELAIINGTYRPMKSPNPA) are qua2 domain; involved in RNA binding. Positions 443–463 (NTNVSPSGASPSASSVNNTSF) are disordered. Residues 447–457 (SPSGASPSASS) show a composition bias toward low complexity.

As to quaternary structure, homodimer. In terms of processing, phosphorylated by cdk-2 which may negatively regulate its expression in distal mitotic germline cells. Post-translationally, undergoes proteasomal degradation in proximal oocytes following mating. In terms of tissue distribution, expressed in proximal and distal oocytes in female worms but is eliminated from proximal oocytes following mating.

Its function is as follows. RNA-binding protein which recognizes the 5'-UACUCAU-3' RNA consensus sequence. Binds sequences in both the 5'coding and the 3'-UTR region of rme-2 mRNA. Binds sequences in the 3'-UTR region of cye-1 mRNA. Binds to cyb-2.1, cyb-2.2 and cyb-3 mRNA. Binds sequences in the 3'-UTR region of tra-2 mRNA. Binds to the 3' UTR of Notch receptor homolog glp-1, thereby repressing glp-1 translation in the embryo. Binding to the glp-1 3' UTR is inhibited by pos-1 binding to an overlapping binding site in the glp-1 3' UTR. Germ line-specific tumor suppressor essential for oogenesis. Controls the spatial pattern of translation of multiple oogenesis specific mRNAs (e.g. yolk receptor rme-2) by repression of translation during early meiotic prophase (leptotene to pachytene) and then derepression of translation during diplotene/ diakinesis, following its degradation. Also functions to promote the male sexual fate in the hermaphrodite germline but not the male germline. Represses translation of the vacuolar ATPase component vha-13 in the distal gonad. Functions redundantly with gld-2 to promote the initiation of meiotic development and/or inhibit stem cell proliferation. By regulating cye-1 expression, prevents entry into mitosis in meiotic germline cells. In Caenorhabditis elegans, this protein is Female germline-specific tumor suppressor gld-1 (gld-1).